Consider the following 134-residue polypeptide: Small ribosomal subunit protein uS8c (134 aa).

This sequence belongs to the universal ribosomal protein uS8 family. In terms of assembly, part of the 30S ribosomal subunit.

It is found in the plastid. Its subcellular location is the chloroplast. Its function is as follows. One of the primary rRNA binding proteins, it binds directly to 16S rRNA central domain where it helps coordinate assembly of the platform of the 30S subunit. The chain is Small ribosomal subunit protein uS8c (rps8) from Coffea arabica (Arabian coffee).